Consider the following 201-residue polypeptide: Small ribosomal subunit protein uS4c (201 aa).

An S4 RNA-binding domain is found at 89–149 (MRLDNILFRL…DKPKSGALIK (61 aa)).

This sequence belongs to the universal ribosomal protein uS4 family. Part of the 30S ribosomal subunit. Contacts protein S5. The interaction surface between S4 and S5 is involved in control of translational fidelity.

Its subcellular location is the plastid. One of the primary rRNA binding proteins, it binds directly to 16S rRNA where it nucleates assembly of the body of the 30S subunit. Functionally, with S5 and S12 plays an important role in translational accuracy. This chain is Small ribosomal subunit protein uS4c (rps4), found in Cuscuta reflexa (Southern Asian dodder).